A 227-amino-acid chain; its full sequence is Phosphatidate cytidylyltransferase (227 aa).

Helical transmembrane passes span 31 to 51 (FVIA…LVGM), 65 to 85 (IPYL…LTFL), 93 to 113 (WLIM…MIGG), 131 to 151 (WSGL…ASFI), 165 to 185 (IYLF…DLFI), and 206 to 226 (GVLD…FISI).

Belongs to the CDS family.

The protein resides in the cell membrane. The enzyme catalyses a 1,2-diacyl-sn-glycero-3-phosphate + CTP + H(+) = a CDP-1,2-diacyl-sn-glycerol + diphosphate. The protein operates within phospholipid metabolism; CDP-diacylglycerol biosynthesis; CDP-diacylglycerol from sn-glycerol 3-phosphate: step 3/3. The chain is Phosphatidate cytidylyltransferase (cdsA) from Rickettsia felis (strain ATCC VR-1525 / URRWXCal2) (Rickettsia azadi).